Reading from the N-terminus, the 558-residue chain is Alpha-1,3-mannosyltransferase MNT2 (558 aa).

Topologically, residues 1 to 6 are cytoplasmic; the sequence is MRRKNR. A helical; Signal-anchor for type II membrane protein membrane pass occupies residues 7 to 27; sequence LFILVVLLGIVLVVYYSQLNS. Topologically, residues 28–558 are lumenal; that stretch reads LDLVEPVQSS…QIVDIWNKDI (531 aa). Asn187 carries an N-linked (GlcNAc...) asparagine glycan.

Belongs to the MNN1/MNT family.

The protein localises to the golgi apparatus membrane. It participates in protein modification; protein glycosylation. Mannosyltransferase involved in adding the 4th and 5th mannose residues of O-linked glycans. The chain is Alpha-1,3-mannosyltransferase MNT2 (MNT2) from Saccharomyces cerevisiae (strain ATCC 204508 / S288c) (Baker's yeast).